We begin with the raw amino-acid sequence, 396 residues long: MAKGKFERTKPHVNVGTIGHVDHGKTTLTAAIATVLSKKFGGEAKGYDQIDNAPEEKARGITINTSHVEYETTTRHYAHVDCPGHADYVKNMITGAAQMDGAILVCSAADGPMPQTREHILLARQVGVPYIIVFLNKCDMVDDAELLELVEMEVRELLSKYEFPGDDLPIIKGSAKLALEGDQGPLGEAAILALADALDSYIPTPERAVDGAFLLPVEDVFSISGRGTVVTGRIERGIVKVGESLEIVGIRDTQVTTCTGVEMFRKLLDQGQAGDNVGVLLRGTKREDVERGQVLAKPGSIKPHKHFTGEIYVLSKDEGGRHTPFFNNYRPQFYFRTTDVTGSIELPKDKEMVMPGDNVSITVMLINPIAMEEGLRFAIREGGRTVGAGVVAKIIE.

The tr-type G domain maps to 10–206; sequence KPHVNVGTIG…ALDSYIPTPE (197 aa). The segment at 19-26 is G1; that stretch reads GHVDHGKT. 19–26 provides a ligand contact to GTP; the sequence is GHVDHGKT. Residue Thr-26 participates in Mg(2+) binding. The interval 60–64 is G2; sequence GITIN. The segment at 81–84 is G3; that stretch reads DCPG. GTP is bound by residues 81–85 and 136–139; these read DCPGH and NKCD. A G4 region spans residues 136-139; sequence NKCD. Residues 174 to 176 form a G5 region; that stretch reads SAK.

The protein belongs to the TRAFAC class translation factor GTPase superfamily. Classic translation factor GTPase family. EF-Tu/EF-1A subfamily. Monomer.

Its subcellular location is the cytoplasm. It catalyses the reaction GTP + H2O = GDP + phosphate + H(+). Functionally, GTP hydrolase that promotes the GTP-dependent binding of aminoacyl-tRNA to the A-site of ribosomes during protein biosynthesis. This chain is Elongation factor Tu, found in Herminiimonas arsenicoxydans.